We begin with the raw amino-acid sequence, 112 residues long: Large ribosomal subunit protein eL31 (112 aa).

This sequence belongs to the eukaryotic ribosomal protein eL31 family. In terms of assembly, component of the large ribosomal subunit. Mature ribosomes consist of a small (40S) and a large (60S) subunit. The 40S subunit contains about 32 different proteins and 1 molecule of RNA (18S). The 60S subunit contains 45 different proteins and 3 molecules of RNA (25S, 5.8S and 5S).

It localises to the cytoplasm. Its function is as follows. Component of the ribosome, a large ribonucleoprotein complex responsible for the synthesis of proteins in the cell. The small ribosomal subunit (SSU) binds messenger RNAs (mRNAs) and translates the encoded message by selecting cognate aminoacyl-transfer RNA (tRNA) molecules. The large subunit (LSU) contains the ribosomal catalytic site termed the peptidyl transferase center (PTC), which catalyzes the formation of peptide bonds, thereby polymerizing the amino acids delivered by tRNAs into a polypeptide chain. The nascent polypeptides leave the ribosome through a tunnel in the LSU and interact with protein factors that function in enzymatic processing, targeting, and the membrane insertion of nascent chains at the exit of the ribosomal tunnel. The polypeptide is Large ribosomal subunit protein eL31 (Candida albicans (strain SC5314 / ATCC MYA-2876) (Yeast)).